Here is a 117-residue protein sequence, read N- to C-terminus: Ribosome-binding factor A (117 aa).

This sequence belongs to the RbfA family. In terms of assembly, monomer. Binds 30S ribosomal subunits, but not 50S ribosomal subunits or 70S ribosomes.

Its subcellular location is the cytoplasm. One of several proteins that assist in the late maturation steps of the functional core of the 30S ribosomal subunit. Associates with free 30S ribosomal subunits (but not with 30S subunits that are part of 70S ribosomes or polysomes). Required for efficient processing of 16S rRNA. May interact with the 5'-terminal helix region of 16S rRNA. This Nitrosomonas eutropha (strain DSM 101675 / C91 / Nm57) protein is Ribosome-binding factor A.